A 320-amino-acid polypeptide reads, in one-letter code: Sucrose operon repressor (320 aa).

Residues 1–55 (MKNIADIAKIAGVSKSTVSRYLNNGSVSLKTQQKLDEIIRENDYQPNQFAQSLRA) enclose the HTH lacI-type domain. A DNA-binding region (H-T-H motif) is located at residues 4-23 (IADIAKIAGVSKSTVSRYLN).

Its function is as follows. Negative regulator of scrB expression. The chain is Sucrose operon repressor (scrR) from Staphylococcus xylosus.